The sequence spans 306 residues: Pantothenate kinase (306 aa).

ATP is bound at residue 91 to 98 (GSVAVGKS).

It belongs to the prokaryotic pantothenate kinase family.

It localises to the cytoplasm. The catalysed reaction is (R)-pantothenate + ATP = (R)-4'-phosphopantothenate + ADP + H(+). It functions in the pathway cofactor biosynthesis; coenzyme A biosynthesis; CoA from (R)-pantothenate: step 1/5. The polypeptide is Pantothenate kinase (Streptococcus gordonii (strain Challis / ATCC 35105 / BCRC 15272 / CH1 / DL1 / V288)).